A 375-amino-acid polypeptide reads, in one-letter code: UDP-4-amino-4,6-dideoxy-N-acetyl-beta-L-altrosamine transaminase (375 aa).

Substrate-binding positions include Tyr-6, 26–29, Ala-56, and Ser-178; that span reads KQLT. The residue at position 183 (Lys-183) is an N6-(pyridoxal phosphate)lysine. Substrate is bound by residues Asn-228 and 313-316; that span reads QVHY.

This sequence belongs to the DegT/DnrJ/EryC1 family.

It catalyses the reaction UDP-4-amino-4,6-dideoxy-N-acetyl-beta-L-altrosamine + 2-oxoglutarate = UDP-2-acetamido-2,6-dideoxy-beta-L-arabino-hex-4-ulose + L-glutamate. Its function is as follows. Catalyzes the second step in the biosynthesis of pseudaminic acid, a sialic-acid-like sugar that is used to modify flagellin. Uses UDP-2-acetamido-2,6-dideoxy-beta-L-arabino-4-hexulose as substrate producing UDP-4-amino-4,6-dideoxy-beta-L-AltNAc. In Helicobacter pylori (strain ATCC 700392 / 26695) (Campylobacter pylori), this protein is UDP-4-amino-4,6-dideoxy-N-acetyl-beta-L-altrosamine transaminase (pseC).